An 867-amino-acid chain; its full sequence is Retinoblastoma-related protein 1 (867 aa).

A domain A region spans residues Thr275–Leu476. The segment at Thr275–Pro722 is pocket; binds RPD3I and RBAP1. Positions Ile477–Asp594 are spacer. Residues Glu512–Ser563 form a disordered region. Positions Ala530–Asn540 are enriched in basic and acidic residues. Polar residues predominate over residues Glu541–Gln552. Residues Val595 to Pro722 form a domain B region. 2 disordered regions span residues Pro734–Lys762 and Gln843–Thr867.

Belongs to the retinoblastoma protein (RB) family. In terms of assembly, interacts with RPD3I, RBAP1, the Arabidopsis cyclin CYCD3-1, the mastrevirus replication-associated protein A (RepA) and the begomovirus replication-associated protein (Rep). In terms of tissue distribution, ubiquitous.

Its subcellular location is the nucleus. Regulator of biological processes that recruits a histone deacetylase to control gene transcription. May play a role in the entry into mitosis, negatively regulating the cell proliferation. Formation of stable complexes with geminiviridae replication-associated proteins may create a cellular environment which favors viral DNA replication. This is Retinoblastoma-related protein 1 (RBR1) from Zea mays (Maize).